A 186-amino-acid polypeptide reads, in one-letter code: Tetratricopeptide repeat protein 36 (186 aa).

TPR repeat units lie at residues 48–81 (SKALELQGVRAAEAGDLHTALEKFGQAISLLPDR), 83–115 (SAYNNRAQARRLQGDVAGALEDLERAVTLSGGR), and 120–153 (RQSFVQSGLLARFQGRDDDARRDFEKAARLGSPF).

Belongs to the TTC36 family.

The sequence is that of Tetratricopeptide repeat protein 36 (Ttc36) from Mus musculus (Mouse).